Here is a 348-residue protein sequence, read N- to C-terminus: Beta-hexosaminidase (348 aa).

Substrate is bound by residues Asp-62, Arg-70, Arg-134, and 164 to 165 (KH). The active-site Proton donor/acceptor is the His-177. Asp-249 serves as the catalytic Nucleophile.

It belongs to the glycosyl hydrolase 3 family. NagZ subfamily.

Its subcellular location is the cytoplasm. The enzyme catalyses Hydrolysis of terminal non-reducing N-acetyl-D-hexosamine residues in N-acetyl-beta-D-hexosaminides.. It functions in the pathway cell wall biogenesis; peptidoglycan recycling. Plays a role in peptidoglycan recycling by cleaving the terminal beta-1,4-linked N-acetylglucosamine (GlcNAc) from peptide-linked peptidoglycan fragments, giving rise to free GlcNAc, anhydro-N-acetylmuramic acid and anhydro-N-acetylmuramic acid-linked peptides. This Histophilus somni (strain 2336) (Haemophilus somnus) protein is Beta-hexosaminidase.